The chain runs to 101 residues: Putative pterin-4-alpha-carbinolamine dehydratase (101 aa).

This sequence belongs to the pterin-4-alpha-carbinolamine dehydratase family.

The catalysed reaction is (4aS,6R)-4a-hydroxy-L-erythro-5,6,7,8-tetrahydrobiopterin = (6R)-L-erythro-6,7-dihydrobiopterin + H2O. The polypeptide is Putative pterin-4-alpha-carbinolamine dehydratase (Nitrobacter winogradskyi (strain ATCC 25391 / DSM 10237 / CIP 104748 / NCIMB 11846 / Nb-255)).